We begin with the raw amino-acid sequence, 155 residues long: Interleukin-2 (155 aa).

A signal peptide spans 1 to 20 (MYKMQLLSCIALTLVLVANS). O-linked (GalNAc...) threonine glycosylation occurs at T23. A disulfide bond links C79 and C127.

This sequence belongs to the IL-2 family.

The protein localises to the secreted. Its function is as follows. Cytokine produced by activated CD4-positive helper T-cells and to a lesser extend activated CD8-positive T-cells and natural killer (NK) cells that plays pivotal roles in the immune response and tolerance. Binds to a receptor complex composed of either the high-affinity trimeric IL-2R (IL2RA/CD25, IL2RB/CD122 and IL2RG/CD132) or the low-affinity dimeric IL-2R (IL2RB and IL2RG). Interaction with the receptor leads to oligomerization and conformation changes in the IL-2R subunits resulting in downstream signaling starting with phosphorylation of JAK1 and JAK3. In turn, JAK1 and JAK3 phosphorylate the receptor to form a docking site leading to the phosphorylation of several substrates including STAT5. This process leads to activation of several pathways including STAT, phosphoinositide-3-kinase/PI3K and mitogen-activated protein kinase/MAPK pathways. Functions as a T-cell growth factor and can increase NK-cell cytolytic activity as well. Promotes strong proliferation of activated B-cells and subsequently immunoglobulin production. Plays a pivotal role in regulating the adaptive immune system by controlling the survival and proliferation of regulatory T-cells, which are required for the maintenance of immune tolerance. Moreover, participates in the differentiation and homeostasis of effector T-cell subsets, including Th1, Th2, Th17 as well as memory CD8-positive T-cells. This is Interleukin-2 (IL2) from Halichoerus grypus (Gray seal).